We begin with the raw amino-acid sequence, 102 residues long: Putative septation protein SpoVG 2 (102 aa).

The protein belongs to the SpoVG family.

Functionally, could be involved in septation. The chain is Putative septation protein SpoVG 2 from Listeria innocua serovar 6a (strain ATCC BAA-680 / CLIP 11262).